Reading from the N-terminus, the 1717-residue chain is DNA-directed RNA polymerase I subunit RPA1 (1717 aa).

Zn(2+) is bound by residues cysteine 64, cysteine 67, cysteine 74, histidine 77, cysteine 104, and cysteine 107. The interval 110–201 is clamp; sequence LTCPRAAIYL…VAQFWKTHMA (92 aa). Zn(2+)-binding residues include cysteine 205 and cysteine 208. The interval 327-433 is clamp; it reads FTNGQTVNLQ…IRQILEKKEG (107 aa). A rudder region spans residues 410 to 423; sequence DSEMDKLMLEKYPG. Lysine 431, arginine 436, and arginine 443 together coordinate DNA. An involved in RRN3 binding to Pol I complex region spans residues 475 to 549; that stretch reads YPQPVTPWNV…QGTKVVCRHV (75 aa). Arginine 559 provides a ligand contact to RNA. Residues aspartate 595, aspartate 597, and aspartate 599 each coordinate Mg(2+). RNA is bound at residue aspartate 599. Positions 812–890 are funnel; sequence KPNADVVRQR…NEINKACMPL (79 aa). The interval 967 to 1008 is bridging helix; it reads RPPEFFFHCMAGREGLVDTAVKTSRSGYLQRCIIKHLEGLVI. The mediates the interaction with TOP2A stretch occupies residues 1067–1162; that stretch reads ADPQKVLGHI…SLSVWRPDIY (96 aa). Residues 1214–1255 form a trigger loop region; that stretch reads PGEAVGLLAAQSIGEPSTQMTLNTFHFAGRGEMNVTLGIPRL. Arginine 1256 contributes to the DNA binding site. Positions 1372–1493 are disordered; sequence RNVNSRRATQ…RRHSRPQGAE (122 aa). Residues 1380-1397 show a composition bias toward basic and acidic residues; that stretch reads TQKDLNDTEDSGRSQREE. Serine 1393 is subject to Phosphoserine. 2 stretches are compositionally biased toward acidic residues: residues 1398–1419 and 1429–1450; these read ERDEEEEGNIVDAEAEEGDADA and EEEVDYESEEEGEEEEEEEVQE. Residues 1452–1464 show a composition bias toward basic and acidic residues; the sequence is GNIKGDGVHQGHE. A compositionally biased stretch (acidic residues) spans 1465 to 1477; the sequence is PDEEEHLGLEEEE.

It belongs to the RNA polymerase beta' chain family. Component of the RNA polymerase I (Pol I) complex consisting of 13 subunits: a ten-subunit catalytic core composed of POLR1A/RPA1, POLR1B/RPA2, POLR1C/RPAC1, POLR1D/RPAC2, POLR1H/RPA12, POLR2E/RPABC1, POLR2F/RPABC2, POLR2H/RPABC3, POLR2K/RPABC4 and POLR2L/RPABC5; a mobile stalk subunit POLR1F/RPA43 protruding from the core and additional subunits homologous to general transcription factors POLR1E/RPA49 and POLR1G/RPA34. Part of Pol I pre-initiation complex (PIC), in which Pol I core assembles with RRN3 and promoter-bound UTBF and SL1/TIF-IB complex. Interacts (via dock II domain) with TOP2A; this interaction may assist Pol I transcription initiation by releasing supercoils occurring during DNA unwinding. Interacts with CAVIN1; this interaction induces the dissociation of Pol I complex paused at rDNA terminator sequences. Interacts with MYO1C. Interacts with ERBB2. Interacts with DDX11. Interacts with RECQL5. Requires Mg(2+) as cofactor. Phosphorylated.

It localises to the nucleus. Its subcellular location is the nucleolus. The protein localises to the chromosome. The enzyme catalyses RNA(n) + a ribonucleoside 5'-triphosphate = RNA(n+1) + diphosphate. Catalytic core component of RNA polymerase I (Pol I), a DNA-dependent RNA polymerase which synthesizes ribosomal RNA precursors using the four ribonucleoside triphosphates as substrates. Transcribes 47S pre-rRNAs from multicopy rRNA gene clusters, giving rise to 5.8S, 18S and 28S ribosomal RNAs. Pol I-mediated transcription cycle proceeds through transcription initiation, transcription elongation and transcription termination stages. During transcription initiation, Pol I pre-initiation complex (PIC) is recruited by the selectivity factor 1 (SL1/TIF-IB) complex bound to the core promoter that precedes an rDNA repeat unit. The PIC assembly bends the promoter favoring the formation of the transcription bubble and promoter escape. Once the polymerase has escaped from the promoter it enters the elongation phase during which RNA is actively polymerized, based on complementarity with the template DNA strand. Highly processive, assembles in structures referred to as 'Miller trees' where many elongating Pol I complexes queue and transcribe the same rDNA coding regions. At terminator sequences downstream of the rDNA gene, PTRF interacts with Pol I and halts Pol I transcription leading to the release of the RNA transcript and polymerase from the DNA. Forms Pol I active center together with the second largest subunit POLR1B/RPA2. Appends one nucleotide at a time to the 3' end of the nascent RNA, with POLR1A/RPA1 contributing a Mg(2+)-coordinating DxDGD motif, and POLR1B/RPA2 participating in the coordination of a second Mg(2+) ion and providing lysine residues believed to facilitate Watson-Crick base pairing between the incoming nucleotide and the template base. Typically, Mg(2+) ions direct a 5' nucleoside triphosphate to form a phosphodiester bond with the 3' hydroxyl of the preceding nucleotide of the nascent RNA, with the elimination of pyrophosphate. Has proofreading activity: Pauses and backtracks to allow the cleavage of a missincorporated nucleotide via POLR1H/RPA12. High Pol I processivity is associated with decreased transcription fidelity. The protein is DNA-directed RNA polymerase I subunit RPA1 of Mus musculus (Mouse).